Reading from the N-terminus, the 175-residue chain is NADH-ubiquinone oxidoreductase chain 6 (175 aa).

5 helical membrane-spanning segments follow: residues 1–21, 25–45, 48–68, 88–108, and 149–169; these read MMTY…VGFS, SPIY…GIVL, GGSF…LVVF, TVLS…GYCI, and YGTW…LVVM.

This sequence belongs to the complex I subunit 6 family. In terms of assembly, core subunit of respiratory chain NADH dehydrogenase (Complex I) which is composed of 45 different subunits.

The protein localises to the mitochondrion inner membrane. The catalysed reaction is a ubiquinone + NADH + 5 H(+)(in) = a ubiquinol + NAD(+) + 4 H(+)(out). Functionally, core subunit of the mitochondrial membrane respiratory chain NADH dehydrogenase (Complex I) which catalyzes electron transfer from NADH through the respiratory chain, using ubiquinone as an electron acceptor. Essential for the catalytic activity and assembly of complex I. This Urotrichus talpoides (Japanese shrew mole) protein is NADH-ubiquinone oxidoreductase chain 6 (MT-ND6).